The sequence spans 144 residues: Large ribosomal subunit protein uL15 (144 aa).

Residues 1–25 (MFLNTIGARDGSRPEKKRVGRGIGS) are disordered.

The protein belongs to the universal ribosomal protein uL15 family. As to quaternary structure, part of the 50S ribosomal subunit.

Its function is as follows. Binds to the 23S rRNA. The polypeptide is Large ribosomal subunit protein uL15 (Methylococcus capsulatus (strain ATCC 33009 / NCIMB 11132 / Bath)).